A 340-amino-acid chain; its full sequence is MPQAHFFALLLAAVVPAVLADGPPESMGEKFSGLNVLDGNGGLQSLTPTPYTISQWPWGTVPKLCYDTSVNNKYCNPYDLEVYDVRYTDCPIPTTVCRCKNSPMAIDTIAQRVGQLPVKARQYNGYVSSFAGDMCSAYSDSFNNYFFGDCGNSESVFFHELSHNLDRHVAGASINDWYSLSQDWKDTVAKDTCVADHYSKASWLEAYAQVGVMAGYDATVQSIYTQNVGCMVNQVKKVVGQLNSVWRKQPGQMCDRYWIKDTTVCMGPDAEASGHCQASKADVAAESGGVNPVLPDGQQKKHDALVKELQRHAEAAAGISSGKPAADRKTKGKKGTKFRV.

A disordered region spans residues 313–340 (AEAAAGISSGKPAADRKTKGKKGTKFRV). The segment covering 330-340 (TKGKKGTKFRV) has biased composition (basic residues).

The protein is Conidiation-specific protein 13 (con-13) of Neurospora crassa (strain ATCC 24698 / 74-OR23-1A / CBS 708.71 / DSM 1257 / FGSC 987).